A 639-amino-acid polypeptide reads, in one-letter code: 1-deoxy-D-xylulose-5-phosphate synthase (639 aa).

Residues H79 and 120–122 (AHS) each bind thiamine diphosphate. D151 contacts Mg(2+). Thiamine diphosphate-binding positions include 152–153 (GA), N180, Y289, and E371. N180 lines the Mg(2+) pocket.

It belongs to the transketolase family. DXPS subfamily. As to quaternary structure, homodimer. The cofactor is Mg(2+). Thiamine diphosphate serves as cofactor.

It catalyses the reaction D-glyceraldehyde 3-phosphate + pyruvate + H(+) = 1-deoxy-D-xylulose 5-phosphate + CO2. It functions in the pathway metabolic intermediate biosynthesis; 1-deoxy-D-xylulose 5-phosphate biosynthesis; 1-deoxy-D-xylulose 5-phosphate from D-glyceraldehyde 3-phosphate and pyruvate: step 1/1. In terms of biological role, catalyzes the acyloin condensation reaction between C atoms 2 and 3 of pyruvate and glyceraldehyde 3-phosphate to yield 1-deoxy-D-xylulose-5-phosphate (DXP). The protein is 1-deoxy-D-xylulose-5-phosphate synthase of Rhizorhabdus wittichii (strain DSM 6014 / CCUG 31198 / JCM 15750 / NBRC 105917 / EY 4224 / RW1) (Sphingomonas wittichii).